A 365-amino-acid polypeptide reads, in one-letter code: Histidinol-phosphate aminotransferase 2 (365 aa).

Lys-222 bears the N6-(pyridoxal phosphate)lysine mark.

This sequence belongs to the class-II pyridoxal-phosphate-dependent aminotransferase family. Histidinol-phosphate aminotransferase subfamily. As to quaternary structure, homodimer. Requires pyridoxal 5'-phosphate as cofactor.

The catalysed reaction is L-histidinol phosphate + 2-oxoglutarate = 3-(imidazol-4-yl)-2-oxopropyl phosphate + L-glutamate. The protein operates within amino-acid biosynthesis; L-histidine biosynthesis; L-histidine from 5-phospho-alpha-D-ribose 1-diphosphate: step 7/9. The protein is Histidinol-phosphate aminotransferase 2 (hisC2) of Bordetella parapertussis (strain 12822 / ATCC BAA-587 / NCTC 13253).